A 137-amino-acid chain; its full sequence is MDYTLRRRSLLAEVYSGRTGVSEVCDANPYLLRAAKFHGKPSRVICPICRKEQLTLVSWVFGEHLGAVSGSARTAEELILLATRFSEFAVHVVEVCRTCSWNHLVKSYVLGAARPARPPRGSGGTRTARNGARTASE.

Residues A116–E137 are disordered. Residues T125 to E137 are compositionally biased toward polar residues.

This is an uncharacterized protein from Mycobacterium bovis (strain ATCC BAA-935 / AF2122/97).